Here is a 414-residue protein sequence, read N- to C-terminus: 2,3-diketo-5-methylthiopentyl-1-phosphate enolase (414 aa).

Lys99 acts as the Proton acceptor in catalysis. Substrate is bound by residues Lys148, 174 to 177 (KDDE), His265, Gly338, and 360 to 361 (GG). Mg(2+) contacts are provided by Lys174, Asp176, and Glu177. Residue Lys174 is modified to N6-carboxylysine.

The protein belongs to the RuBisCO large chain family. Type IV subfamily. In terms of assembly, homodimer. Mg(2+) serves as cofactor.

The enzyme catalyses 5-methylsulfanyl-2,3-dioxopentyl phosphate = 2-hydroxy-5-methylsulfanyl-3-oxopent-1-enyl phosphate. The protein operates within amino-acid biosynthesis; L-methionine biosynthesis via salvage pathway; L-methionine from S-methyl-5-thio-alpha-D-ribose 1-phosphate: step 3/6. Functionally, catalyzes the enolization of 2,3-diketo-5-methylthiopentyl-1-phosphate (DK-MTP-1-P) into 2-hydroxy-3-keto-5-methylthiopentenyl-1-phosphate (HK-MTPenyl-1-P). The polypeptide is 2,3-diketo-5-methylthiopentyl-1-phosphate enolase (Bacillus cytotoxicus (strain DSM 22905 / CIP 110041 / 391-98 / NVH 391-98)).